The primary structure comprises 203 residues: MSQREGSLEDHQTDSSFSFLPHLEAKIRQTHNLARLLTKYADQLLEEYVQQQGEPFGLPGFSPPRLPLAGLSGPAPSHAGLPVSERLRQDAAALSALPALLDAVRRRQAELNPRAPRLLRSLEDAARQVRALGAAVETVLAALGAAARGPVPEPVATSALFTSNSAAGVFSAKVLGLHVCGLYGEWVSRTEGDLGQLVPGGVA.

The protein belongs to the IL-6 superfamily. In terms of tissue distribution, expressed in the ventricle and atrium of adult rats. Also detected in the lung, kidney, liver, skeletal muscle, stomach and urinary bladder. Not detected in brain, colon, testis, spleen or thymus. Overexpressed in the ventricles in the case of hypertension and hypertrophy.

The protein localises to the secreted. Functionally, induces cardiac myocyte hypertrophy in vitro. Binds to and activates the ILST/gp130 receptor. The protein is Cardiotrophin-1 (Ctf1) of Rattus norvegicus (Rat).